The chain runs to 372 residues: Putative glutamate--cysteine ligase 2 (372 aa).

It belongs to the glutamate--cysteine ligase type 2 family. YbdK subfamily.

It carries out the reaction L-cysteine + L-glutamate + ATP = gamma-L-glutamyl-L-cysteine + ADP + phosphate + H(+). Functionally, ATP-dependent carboxylate-amine ligase which exhibits weak glutamate--cysteine ligase activity. The sequence is that of Putative glutamate--cysteine ligase 2 from Rhodopirellula baltica (strain DSM 10527 / NCIMB 13988 / SH1).